A 221-amino-acid polypeptide reads, in one-letter code: Ras-related protein Rab-27A (221 aa).

Ser-2 bears the N-acetylserine mark. Residue Ser-2 is modified to Phosphoserine. 16–24 (GDSGVGKTS) is a binding site for GTP. Residues 38–46 (FITTVGIDF) carry the Effector region motif. GTP contacts are provided by residues 74-78 (DTAGQ), 133-136 (NKSD), and 163-165 (SAA). A disulfide bridge connects residues Cys-123 and Cys-188. S-geranylgeranyl cysteine attachment occurs at residues Cys-219 and Cys-221. Cys-221 is modified (cysteine methyl ester).

This sequence belongs to the small GTPase superfamily. Rab family. As to quaternary structure, binds SYTL1, SLAC2B, MYRIP, SYTL3, SYTL4 and SYTL5. Interacts with RPH3A and RPH3A. Binds MLPH and SYTL2. Interacts with UNC13D. Does not interact with the BLOC-3 complex (heterodimer of HPS1 and HPS4). Interacts (GDP-bound form preferentially) with DENND10.

The protein resides in the membrane. It localises to the melanosome. The protein localises to the late endosome. Its subcellular location is the lysosome. It catalyses the reaction GTP + H2O = GDP + phosphate + H(+). Regulated by guanine nucleotide exchange factors (GEFs) which promote the exchange of bound GDP for free GTP, GTPase activating proteins (GAPs) which increase the GTP hydrolysis activity, and GDP dissociation inhibitors which inhibit the dissociation of the nucleotide from the GTPase. Activated by GEFs such as DENND10. Small GTPase which cycles between active GTP-bound and inactive GDP-bound states. In its active state, binds to a variety of effector proteins to regulate homeostasis of late endocytic pathway, including endosomal positioning, maturation and secretion. Plays a role in cytotoxic granule exocytosis in lymphocytes. Required for both granule maturation and granule docking and priming at the immunologic synapse. The sequence is that of Ras-related protein Rab-27A (RAB27A) from Canis lupus familiaris (Dog).